The chain runs to 238 residues: Small ribosomal subunit protein uS3 (238 aa).

The region spanning 39-108 (IRKFVKKKLF…NVAVNVIEVK (70 aa)) is the KH type-2 domain.

This sequence belongs to the universal ribosomal protein uS3 family. As to quaternary structure, part of the 30S ribosomal subunit. Forms a tight complex with proteins S10 and S14.

Functionally, binds the lower part of the 30S subunit head. Binds mRNA in the 70S ribosome, positioning it for translation. The polypeptide is Small ribosomal subunit protein uS3 (Alkaliphilus oremlandii (strain OhILAs) (Clostridium oremlandii (strain OhILAs))).